The chain runs to 160 residues: Flavodoxin (160 aa).

Positions 3-153 (ISILYSSKTG…NARIFGERIA (151 aa)) constitute a Flavodoxin-like domain.

Belongs to the flavodoxin family. FMN serves as cofactor.

Functionally, low-potential electron donor to a number of redox enzymes. The protein is Flavodoxin (floX) of Clostridium saccharobutylicum.